A 520-amino-acid polypeptide reads, in one-letter code: Maturase K (520 aa).

Belongs to the intron maturase 2 family. MatK subfamily.

It localises to the plastid. The protein resides in the chloroplast. In terms of biological role, usually encoded in the trnK tRNA gene intron. Probably assists in splicing its own and other chloroplast group II introns. The sequence is that of Maturase K from Aspidistra elatior (Cast-iron plant).